Consider the following 561-residue polypeptide: Oligo-1,6-glucosidase 1 (561 aa).

5 residues coordinate Ca(2+): Asp-20, Asn-22, Asp-24, Phe-26, and Asp-28. Residue Asp-199 is the Nucleophile of the active site. Residue Glu-255 is the Proton donor of the active site.

It belongs to the glycosyl hydrolase 13 family.

The protein resides in the cytoplasm. It catalyses the reaction Hydrolysis of (1-&gt;6)-alpha-D-glucosidic linkages in some oligosaccharides produced from starch and glycogen by alpha-amylase, and in isomaltose.. Hydrolyzes various disaccharides such as sucrose, maltose, and isomaltose with different efficiencies. Also hydrolyzes longer maltodextrins from maltotriose up to maltohexaose, but not maltoheptaose, palatinose, isomaltotriose, or isomaltotetraose. In Bacillus subtilis (strain 168), this protein is Oligo-1,6-glucosidase 1 (malL).